A 198-amino-acid chain; its full sequence is Pyridoxine/pyridoxamine 5'-phosphate oxidase (198 aa).

FMN is bound by residues 47-52 (RMVLVK), 62-63 (FT), Arg-68, Lys-69, and Gln-91. Lys-52 serves as a coordination point for substrate. Positions 109, 113, and 117 each coordinate substrate. Residues 126–127 (QS) and Trp-171 each bind FMN. Residue 177–179 (RLH) coordinates substrate. Residue Arg-181 participates in FMN binding.

It belongs to the pyridoxamine 5'-phosphate oxidase family. As to quaternary structure, homodimer. It depends on FMN as a cofactor.

The catalysed reaction is pyridoxamine 5'-phosphate + O2 + H2O = pyridoxal 5'-phosphate + H2O2 + NH4(+). It carries out the reaction pyridoxine 5'-phosphate + O2 = pyridoxal 5'-phosphate + H2O2. Its pathway is cofactor metabolism; pyridoxal 5'-phosphate salvage; pyridoxal 5'-phosphate from pyridoxamine 5'-phosphate: step 1/1. The protein operates within cofactor metabolism; pyridoxal 5'-phosphate salvage; pyridoxal 5'-phosphate from pyridoxine 5'-phosphate: step 1/1. Functionally, catalyzes the oxidation of either pyridoxine 5'-phosphate (PNP) or pyridoxamine 5'-phosphate (PMP) into pyridoxal 5'-phosphate (PLP). This chain is Pyridoxine/pyridoxamine 5'-phosphate oxidase, found in Anaeromyxobacter dehalogenans (strain 2CP-C).